The chain runs to 232 residues: Ubiquinone biosynthesis O-methyltransferase (232 aa).

S-adenosyl-L-methionine-binding residues include Arg36, Gly55, Asp76, and Leu120.

This sequence belongs to the methyltransferase superfamily. UbiG/COQ3 family.

It carries out the reaction a 3-demethylubiquinol + S-adenosyl-L-methionine = a ubiquinol + S-adenosyl-L-homocysteine + H(+). The catalysed reaction is a 3-(all-trans-polyprenyl)benzene-1,2-diol + S-adenosyl-L-methionine = a 2-methoxy-6-(all-trans-polyprenyl)phenol + S-adenosyl-L-homocysteine + H(+). It participates in cofactor biosynthesis; ubiquinone biosynthesis. In terms of biological role, O-methyltransferase that catalyzes the 2 O-methylation steps in the ubiquinone biosynthetic pathway. In Pseudomonas aeruginosa (strain UCBPP-PA14), this protein is Ubiquinone biosynthesis O-methyltransferase.